Reading from the N-terminus, the 227-residue chain is Cytochrome c oxidase subunit 2 (227 aa).

Over 1–14 (MAYPLQLGLQDATS) the chain is Mitochondrial intermembrane. A helical membrane pass occupies residues 15 to 45 (PIMEELMNFHDHTLMIVFLISSLVLYIISLM). Residues 46–59 (LTTKLTHTSTMDAQ) are Mitochondrial matrix-facing. A helical membrane pass occupies residues 60–87 (EVETIWTILPAAILVLIALPSLRILYMM). Residues 88 to 227 (DEINNPVLTV…YFENWSASMI (140 aa)) lie on the Mitochondrial intermembrane side of the membrane. The Cu cation site is built by H161, C196, E198, C200, H204, and M207. E198 contacts Mg(2+). The residue at position 218 (Y218) is a Phosphotyrosine.

This sequence belongs to the cytochrome c oxidase subunit 2 family. Component of the cytochrome c oxidase (complex IV, CIV), a multisubunit enzyme composed of 14 subunits. The complex is composed of a catalytic core of 3 subunits MT-CO1, MT-CO2 and MT-CO3, encoded in the mitochondrial DNA, and 11 supernumerary subunits COX4I, COX5A, COX5B, COX6A, COX6B, COX6C, COX7A, COX7B, COX7C, COX8 and NDUFA4, which are encoded in the nuclear genome. The complex exists as a monomer or a dimer and forms supercomplexes (SCs) in the inner mitochondrial membrane with NADH-ubiquinone oxidoreductase (complex I, CI) and ubiquinol-cytochrome c oxidoreductase (cytochrome b-c1 complex, complex III, CIII), resulting in different assemblies (supercomplex SCI(1)III(2)IV(1) and megacomplex MCI(2)III(2)IV(2)). Found in a complex with TMEM177, COA6, COX18, COX20, SCO1 and SCO2. Interacts with TMEM177 in a COX20-dependent manner. Interacts with COX20. Interacts with COX16. Requires Cu cation as cofactor.

The protein resides in the mitochondrion inner membrane. The enzyme catalyses 4 Fe(II)-[cytochrome c] + O2 + 8 H(+)(in) = 4 Fe(III)-[cytochrome c] + 2 H2O + 4 H(+)(out). Functionally, component of the cytochrome c oxidase, the last enzyme in the mitochondrial electron transport chain which drives oxidative phosphorylation. The respiratory chain contains 3 multisubunit complexes succinate dehydrogenase (complex II, CII), ubiquinol-cytochrome c oxidoreductase (cytochrome b-c1 complex, complex III, CIII) and cytochrome c oxidase (complex IV, CIV), that cooperate to transfer electrons derived from NADH and succinate to molecular oxygen, creating an electrochemical gradient over the inner membrane that drives transmembrane transport and the ATP synthase. Cytochrome c oxidase is the component of the respiratory chain that catalyzes the reduction of oxygen to water. Electrons originating from reduced cytochrome c in the intermembrane space (IMS) are transferred via the dinuclear copper A center (CU(A)) of subunit 2 and heme A of subunit 1 to the active site in subunit 1, a binuclear center (BNC) formed by heme A3 and copper B (CU(B)). The BNC reduces molecular oxygen to 2 water molecules using 4 electrons from cytochrome c in the IMS and 4 protons from the mitochondrial matrix. The polypeptide is Cytochrome c oxidase subunit 2 (MT-CO2) (Micaelamys namaquensis (Namaqua rock rat)).